Reading from the N-terminus, the 175-residue chain is ATP synthase subunit b (175 aa).

Residues 20-40 traverse the membrane as a helical segment; that stretch reads LIFWTAVTFVIVLVILKKIAW.

It belongs to the ATPase B chain family. In terms of assembly, F-type ATPases have 2 components, F(1) - the catalytic core - and F(0) - the membrane proton channel. F(1) has five subunits: alpha(3), beta(3), gamma(1), delta(1), epsilon(1). F(0) has four main subunits: a(1), b(2) and c(10-14). The alpha and beta chains form an alternating ring which encloses part of the gamma chain. F(1) is attached to F(0) by a central stalk formed by the gamma and epsilon chains, while a peripheral stalk is formed by the delta and b chains.

The protein resides in the cell inner membrane. Its function is as follows. F(1)F(0) ATP synthase produces ATP from ADP in the presence of a proton or sodium gradient. F-type ATPases consist of two structural domains, F(1) containing the extramembraneous catalytic core and F(0) containing the membrane proton channel, linked together by a central stalk and a peripheral stalk. During catalysis, ATP synthesis in the catalytic domain of F(1) is coupled via a rotary mechanism of the central stalk subunits to proton translocation. In terms of biological role, component of the F(0) channel, it forms part of the peripheral stalk, linking F(1) to F(0). This is ATP synthase subunit b from Chlorobaculum parvum (strain DSM 263 / NCIMB 8327) (Chlorobium vibrioforme subsp. thiosulfatophilum).